Reading from the N-terminus, the 332-residue chain is Procathepsin L (332 aa).

An N-terminal signal peptide occupies residues 1-17; the sequence is MHPLLFLAGLCLGVASA. Positions 18 to 112 are cleaved as a propeptide — activation peptide; it reads APQLYQSLDA…KVFQAPFFVE (95 aa). A Zn(2+)-binding site is contributed by Glu-121. Cys-137 is an active-site residue. Glu-162, Asp-183, Glu-198, and Asp-208 together coordinate Zn(2+). A disulfide bridge links Cys-168 with Cys-210. Residue Asn-220 is glycosylated (N-linked (GlcNAc...) asparagine). Asp-226, Asp-249, Asp-272, and Asp-274 together coordinate Zn(2+). A disulfide bridge links Cys-268 with Cys-321. Residue His-275 is part of the active site. Positions 288 to 290 are excised as a propeptide; that stretch reads ETE. The active site involves Asn-299.

Belongs to the peptidase C1 family. As to quaternary structure, dimer of a heavy and a light chain linked by disulfide bonds. Interacts with Long isoform of CD74/Ii chain; the interaction stabilizes the conformation of mature CTSL. In terms of processing, during export along the endocytic pathway, pro-CTSL undergoes several proteolytic cleavages to generate the CTSL single-chain and two-chain mature forms, composed of a heavy chain linked to a light chain by disulfide bonds. Autocleavage; produces the single-chain CTSL after cleavage of the propeptide. The cleavage can be intermolecular. Expressed in the endometrium.

The protein resides in the lysosome. Its subcellular location is the apical cell membrane. The protein localises to the cytoplasmic vesicle. It localises to the secretory vesicle. It is found in the chromaffin granule. The protein resides in the secreted. Its subcellular location is the extracellular space. The enzyme catalyses Specificity close to that of papain. As compared to cathepsin B, cathepsin L exhibits higher activity toward protein substrates, but has little activity on Z-Arg-Arg-NHMec, and no peptidyl-dipeptidase activity.. Its activity is regulated as follows. Inhibited by the propeptide produced by autocleavage. Long isoform of CD74/Ii chain stabilizes the conformation of mature CTSL by binding to its active site and serving as a chaperone to help maintain a pool of mature enzyme in endocytic compartments and extracellular space of APCs. IFNG enhances the conversion into the CTSL mature and active form. Inhibited by CST6. Inhibited by the glycopeptide antibiotic teicoplanin. Inhibited by amantadine. Functionally, thiol protease important for the overall degradation of proteins in lysosomes. Plays a critical for normal cellular functions such as general protein turnover, antigen processing and bone remodeling. Involved in the solubilization of cross-linked TG/thyroglobulin and in the subsequent release of thyroid hormone thyroxine (T4) by limited proteolysis of TG/thyroglobulin in the thyroid follicle lumen. In neuroendocrine chromaffin cells secretory vesicles, catalyzes the prohormone proenkephalin processing to the active enkephalin peptide neurotransmitter. In thymus, regulates CD4(+) T cell positive selection by generating the major histocompatibility complex class II (MHCII) bound peptide ligands presented by cortical thymic epithelial cells. Also mediates invariant chain processing in cortical thymic epithelial cells. Major elastin-degrading enzyme at neutral pH. Accumulates as a mature and active enzyme in the extracellular space of antigen presenting cells (APCs) to regulate degradation of the extracellular matrix in the course of inflammation. Secreted form generates endostatin from COL18A1. Critical for cardiac morphology and function. Plays an important role in hair follicle morphogenesis and cycling, as well as epidermal differentiation. Required for maximal stimulation of steroidogenesis by TIMP1. The sequence is that of Procathepsin L (CTSL) from Felis catus (Cat).